The chain runs to 147 residues: uncharacterized protein (147 aa).

Residues 1–137 enclose the HTH marR-type domain; it reads MRDNTIGSLI…LYELMTKVHK (137 aa). The H-T-H motif DNA-binding region spans 53-76; sequence QMELAEKVTVTQGGISRMLTRLEK.

This is an uncharacterized protein from Bacillus thuringiensis subsp. konkukian (strain 97-27).